Here is a 276-residue protein sequence, read N- to C-terminus: Large ribosomal subunit protein uL2 (276 aa).

The segment at 224-276 is disordered; sequence AMNPVDHPLGGGEGKSSGGRHPVTPWGKPTKGYKTRNKKKPSSKLIVKRRGQK. A compositionally biased stretch (basic residues) spans 254 to 276; that stretch reads KGYKTRNKKKPSSKLIVKRRGQK.

This sequence belongs to the universal ribosomal protein uL2 family. In terms of assembly, part of the 50S ribosomal subunit. Forms a bridge to the 30S subunit in the 70S ribosome.

One of the primary rRNA binding proteins. Required for association of the 30S and 50S subunits to form the 70S ribosome, for tRNA binding and peptide bond formation. It has been suggested to have peptidyltransferase activity; this is somewhat controversial. Makes several contacts with the 16S rRNA in the 70S ribosome. The protein is Large ribosomal subunit protein uL2 of Solidesulfovibrio magneticus (strain ATCC 700980 / DSM 13731 / RS-1) (Desulfovibrio magneticus).